The sequence spans 339 residues: Glyceraldehyde-3-phosphate dehydrogenase (339 aa).

NAD(+)-binding positions include 12–13 (RI), D39, R84, and S127. D-glyceraldehyde 3-phosphate is bound by residues 157-159 (SCT), T188, R203, 216-217 (TG), and R239. The active-site Nucleophile is C158. N320 lines the NAD(+) pocket.

The protein belongs to the glyceraldehyde-3-phosphate dehydrogenase family. In terms of assembly, homotetramer.

It is found in the cytoplasm. It catalyses the reaction D-glyceraldehyde 3-phosphate + phosphate + NAD(+) = (2R)-3-phospho-glyceroyl phosphate + NADH + H(+). It functions in the pathway carbohydrate degradation; glycolysis; pyruvate from D-glyceraldehyde 3-phosphate: step 1/5. In terms of biological role, catalyzes the oxidative phosphorylation of glyceraldehyde 3-phosphate (G3P) to 1,3-bisphosphoglycerate (BPG) using the cofactor NAD. The first reaction step involves the formation of a hemiacetal intermediate between G3P and a cysteine residue, and this hemiacetal intermediate is then oxidized to a thioester, with concomitant reduction of NAD to NADH. The reduced NADH is then exchanged with the second NAD, and the thioester is attacked by a nucleophilic inorganic phosphate to produce BPG. This Mycobacterium bovis (strain ATCC BAA-935 / AF2122/97) protein is Glyceraldehyde-3-phosphate dehydrogenase (gap).